We begin with the raw amino-acid sequence, 83 residues long: Small ribosomal subunit protein bS20 (83 aa).

Belongs to the bacterial ribosomal protein bS20 family.

Its function is as follows. Binds directly to 16S ribosomal RNA. The polypeptide is Small ribosomal subunit protein bS20 (Flavobacterium johnsoniae (strain ATCC 17061 / DSM 2064 / JCM 8514 / BCRC 14874 / CCUG 350202 / NBRC 14942 / NCIMB 11054 / UW101) (Cytophaga johnsonae)).